Reading from the N-terminus, the 848-residue chain is ATP-dependent Clp protease ATP-binding subunit ClpC1 (848 aa).

The 143-residue stretch at 2–144 (FERFTDRARR…RQQVIQLLSG (143 aa)) folds into the Clp R domain. Repeat regions lie at residues 5 to 70 (FTDR…IGQG) and 80 to 144 (FTPR…LLSG). The segment at 171–418 (LDQFGRNLTA…RMRIRRMTAP (248 aa)) is i. 216 to 223 (GEPGVGKT) lines the ATP pocket. The UVR domain occupies 425 to 460 (DEKIAEARREKESAIDAQDFEKAASLRDREKTLVAQ). An II region spans residues 479–670 (VDDEQIAEVL…VLIFTSNLGT (192 aa)). Residue 553–560 (GPSGVGKT) coordinates ATP. Residues 821 to 848 (TGTRKPPAEPDLAKAGAHSAGGPEPAAR) are disordered.

This sequence belongs to the ClpA/ClpB family. ClpC subfamily.

Its function is as follows. ATP-dependent specificity component of the Clp protease. It directs the protease to specific substrates. Can perform chaperone functions in the absence of ClpP. Degrades anti-sigma-E factor RseA in the presence of ClpP2. In Mycobacterium tuberculosis (strain ATCC 25618 / H37Rv), this protein is ATP-dependent Clp protease ATP-binding subunit ClpC1 (clpC1).